The chain runs to 472 residues: MAETDVGSVKGKEKGSGKRWILLIGAIAAVLLAVVVAVFLNTQNSSISEFTGKICNCRQAEQQKYIGIVEDCCCDYETVNRLNTEVLNPLLQDLVKTPFYRYFKVKLWCDCPFWPDDGMCRLRDCSVCECPESEFPEVFKKPLSQYNPVCQEGKPQATVDRTLDTRAFRGWTVTDNPWTSDDETDNDEMTYVNLRLNPERYTGYIGPSARRIWEAIYSENCPKHTSEGSCQEEKILYKLVSGLHSSISVHIASDYLLDEATNLWGQNLTLLYDRVLRYPDRVQNLYFTFLFVLRAVTKAEDYLGEAEYETGNVIEDLKTKSLVKQVVSDPKTKAACPVPFDEAKLWKGQRGPELKQQLEKQFRNISAIMDCVGCEKCRLWGKLQILGLGTALKILFTVNGEDNLRHNLELQRNEVIALMNLLHRLSESVKYVHDMSPAAERIAGGHASSGNSFWQRIVTSIAQSKAVSGKRS.

The signal sequence occupies residues 1-37; that stretch reads MAETDVGSVKGKEKGSGKRWILLIGAIAAVLLAVVVA. Asparagine 44 is a glycosylation site (N-linked (GlcNAc...) asparagine). 6 disulfide bridges follow: cysteine 55/cysteine 74, cysteine 57/cysteine 72, cysteine 111/cysteine 371, cysteine 120/cysteine 125, cysteine 221/cysteine 230, and cysteine 374/cysteine 377. Residues arginine 200, threonine 202, and tryptophan 213 each coordinate FAD. FAD-binding residues include serine 241 and histidine 244. Residue asparagine 267 is glycosylated (N-linked (GlcNAc...) asparagine). Positions 274 and 281 each coordinate FAD. The N-linked (GlcNAc...) asparagine glycan is linked to asparagine 364.

This sequence belongs to the EROs family. May function both as a monomer and a homodimer. It depends on FAD as a cofactor. N-glycosylated.

The protein resides in the endoplasmic reticulum membrane. Essential oxidoreductase that oxidizes proteins in the endoplasmic reticulum to produce disulfide bonds. Acts by oxidizing directly PDI isomerase through a direct disulfide exchange. Does not act as a direct oxidant of folding substrate, but relies on PDI to transfer oxidizing equivalent. Does not oxidize all PDI related proteins, suggesting that it can discriminate between PDI and related proteins. Its reoxidation probably involves electron transfer to molecular oxygen via FAD. Acts independently of glutathione. May be responsible for a significant proportion of reactive oxygen species (ROS) in the cell, thereby being a source of oxidative stress. In Arabidopsis thaliana (Mouse-ear cress), this protein is Endoplasmic reticulum oxidoreductin-2 (AERO2).